A 222-amino-acid polypeptide reads, in one-letter code: DUF1769 family protein (222 aa).

The protein belongs to the UPF0590 family.

It is found in the cytoplasm. The protein localises to the nucleus. The polypeptide is DUF1769 family protein (Schizosaccharomyces pombe (strain 972 / ATCC 24843) (Fission yeast)).